A 400-amino-acid chain; its full sequence is Phosphoglycerate kinase (400 aa).

Substrate-binding positions include 24 to 26 (DFN), arginine 39, 62 to 65 (HFGR), arginine 121, and arginine 154. Residues lysine 205, glycine 296, glutamate 327, and 356–359 (GGDS) contribute to the ATP site.

Belongs to the phosphoglycerate kinase family. As to quaternary structure, monomer.

It is found in the cytoplasm. It carries out the reaction (2R)-3-phosphoglycerate + ATP = (2R)-3-phospho-glyceroyl phosphate + ADP. The protein operates within carbohydrate degradation; glycolysis; pyruvate from D-glyceraldehyde 3-phosphate: step 2/5. The polypeptide is Phosphoglycerate kinase (Rippkaea orientalis (strain PCC 8801 / RF-1) (Cyanothece sp. (strain PCC 8801))).